Consider the following 75-residue polypeptide: Protein Tlp homolog (75 aa).

The segment at R53–M75 is disordered.

The protein belongs to the Tlp family.

The polypeptide is Protein Tlp homolog (Clostridium botulinum (strain Langeland / NCTC 10281 / Type F)).